A 171-amino-acid chain; its full sequence is Siroheme decarboxylase NirH subunit (171 aa).

The protein belongs to the Ahb/Nir family. Probably forms a complex composed of NirD, NirL, NirG and NirH. All proteins are required for the total conversion of siroheme to didecarboxysiroheme.

The catalysed reaction is siroheme + 2 H(+) = 12,18-didecarboxysiroheme + 2 CO2. The protein operates within porphyrin-containing compound metabolism. Functionally, involved in heme d1 biosynthesis. Catalyzes the decarboxylation of siroheme into didecarboxysiroheme. This chain is Siroheme decarboxylase NirH subunit, found in Pseudomonas aeruginosa (strain ATCC 15692 / DSM 22644 / CIP 104116 / JCM 14847 / LMG 12228 / 1C / PRS 101 / PAO1).